A 269-amino-acid polypeptide reads, in one-letter code: 4-hydroxy-tetrahydrodipicolinate reductase (269 aa).

NAD(+) contacts are provided by residues 9-14 and glutamate 35; that span reads GAGGRM. An NADP(+)-binding site is contributed by arginine 36. Residues 98–100 and 122–125 contribute to the NAD(+) site; these read GTT and ASNY. Catalysis depends on histidine 155, which acts as the Proton donor/acceptor. Histidine 156 is a binding site for (S)-2,3,4,5-tetrahydrodipicolinate. Lysine 159 functions as the Proton donor in the catalytic mechanism. 165-166 is a binding site for (S)-2,3,4,5-tetrahydrodipicolinate; that stretch reads GT.

This sequence belongs to the DapB family.

The protein localises to the cytoplasm. The enzyme catalyses (S)-2,3,4,5-tetrahydrodipicolinate + NAD(+) + H2O = (2S,4S)-4-hydroxy-2,3,4,5-tetrahydrodipicolinate + NADH + H(+). It catalyses the reaction (S)-2,3,4,5-tetrahydrodipicolinate + NADP(+) + H2O = (2S,4S)-4-hydroxy-2,3,4,5-tetrahydrodipicolinate + NADPH + H(+). It functions in the pathway amino-acid biosynthesis; L-lysine biosynthesis via DAP pathway; (S)-tetrahydrodipicolinate from L-aspartate: step 4/4. Its function is as follows. Catalyzes the conversion of 4-hydroxy-tetrahydrodipicolinate (HTPA) to tetrahydrodipicolinate. In Actinobacillus pleuropneumoniae serotype 3 (strain JL03), this protein is 4-hydroxy-tetrahydrodipicolinate reductase.